The following is a 235-amino-acid chain: Octanoyltransferase (235 aa).

The BPL/LPL catalytic domain occupies 37–220; sequence AGGPDTLLLL…AVNDALDGWL (184 aa). Substrate-binding positions include 78-85, 150-152, and 163-165; these read RGGKITWH, AIG, and GFA. Catalysis depends on C181, which acts as the Acyl-thioester intermediate.

Belongs to the LipB family.

The protein resides in the cytoplasm. It carries out the reaction octanoyl-[ACP] + L-lysyl-[protein] = N(6)-octanoyl-L-lysyl-[protein] + holo-[ACP] + H(+). The protein operates within protein modification; protein lipoylation via endogenous pathway; protein N(6)-(lipoyl)lysine from octanoyl-[acyl-carrier-protein]: step 1/2. Catalyzes the transfer of endogenously produced octanoic acid from octanoyl-acyl-carrier-protein onto the lipoyl domains of lipoate-dependent enzymes. Lipoyl-ACP can also act as a substrate although octanoyl-ACP is likely to be the physiological substrate. In Mycobacterium leprae (strain Br4923), this protein is Octanoyltransferase.